The sequence spans 356 residues: A-type ATP synthase subunit C (356 aa).

This sequence belongs to the V-ATPase V0D/AC39 subunit family. In terms of assembly, has multiple subunits with at least A(3), B(3), C, D, E, F, H, I and proteolipid K(x).

Its subcellular location is the cell membrane. Functionally, component of the A-type ATP synthase that produces ATP from ADP in the presence of a proton gradient across the membrane. The sequence is that of A-type ATP synthase subunit C from Thermoplasma acidophilum (strain ATCC 25905 / DSM 1728 / JCM 9062 / NBRC 15155 / AMRC-C165).